The chain runs to 36 residues: Kappa-isophellitoxin-Tst1a (36 aa).

One can recognise a ShKT domain in the interval 2–36; it reads CENNFSDRECERRKKDCDSSMKFRELSCPKTCGTC. 3 disulfide bridges follow: C2-C36, C11-C29, and C18-C33.

It belongs to the sea anemone type 1 potassium channel toxin family. Type 1a subfamily. In terms of tissue distribution, predominantly expressed in mesenterial filaments (at protein level), a morphological structure that has a functional role in prey killing and digestion. Also expressed in club-tips, tentacles, actinopharynx, body column, mesenterial filaments and pedal disk.

Its subcellular location is the secreted. It is found in the nematocyst. Probable toxin with unknown function. Does not inhibit all channels tested. Is not cytotoxic on macrophage. The sequence is that of Kappa-isophellitoxin-Tst1a from Telmatactis stephensoni (Sea anemone).